A 400-amino-acid chain; its full sequence is Phosphoglycerate kinase (400 aa).

Residues 21–23, Arg36, 59–62, Arg118, and Arg151 each bind substrate; these read DFN and HLGR. Residues Lys201, Gly293, Glu324, and 353-356 each bind ATP; that span reads GGDS.

The protein belongs to the phosphoglycerate kinase family. Monomer.

It is found in the cytoplasm. The enzyme catalyses (2R)-3-phosphoglycerate + ATP = (2R)-3-phospho-glyceroyl phosphate + ADP. Its pathway is carbohydrate degradation; glycolysis; pyruvate from D-glyceraldehyde 3-phosphate: step 2/5. In Fervidobacterium nodosum (strain ATCC 35602 / DSM 5306 / Rt17-B1), this protein is Phosphoglycerate kinase.